The following is a 946-amino-acid chain: Serine/threonine-protein kinase PLK4 (946 aa).

The Protein kinase domain occupies 12-265 (FKVLNLLGKG…LSSVLDHAFM (254 aa)). ATP is bound by residues 18–26 (LGKGSFACV) and Lys-41. The active-site Proton acceptor is Asp-136. The segment at 330–395 (HPAERSNGGS…TYGKPSSFSE (66 aa)) is disordered. Polar residues predominate over residues 378 to 394 (RSGTSQSQTYGKPSSFS). Residues 566–679 (TLRSIISPLN…AKFIQLVRSK (114 aa)) enclose the Cryptic POLO box 1 (CPB1) domain. The Cryptic POLO box 2 (CPB2) domain occupies 680-792 (MPKVTYYTRY…GRRPAITESP (113 aa)). The tract at residues 789–828 (TESPRTQLTVDSARERKDEQSSANRVLHSSATSPPQIPNI) is disordered. The span at 809-828 (SSANRVLHSSATSPPQIPNI) shows a compositional bias: polar residues. Positions 864–942 (QVLKSVFVEN…LSSILMLFAS (79 aa)) constitute a POLO box domain.

It belongs to the protein kinase superfamily. Ser/Thr protein kinase family. CDC5/Polo subfamily. Homodimer. Post-translationally, ubiquitinated; leading to its degradation by the proteasome.

It localises to the cytoplasm. The protein localises to the cytoskeleton. The protein resides in the microtubule organizing center. It is found in the centrosome. Its subcellular location is the centriole. It catalyses the reaction L-seryl-[protein] + ATP = O-phospho-L-seryl-[protein] + ADP + H(+). The catalysed reaction is L-threonyl-[protein] + ATP = O-phospho-L-threonyl-[protein] + ADP + H(+). Its function is as follows. Serine/threonine-protein kinase that plays a central role in centriole duplication. Able to trigger procentriole formation on the surface of the parental centriole cylinder, leading to the recruitment of centriole biogenesis proteins such as sass6, cpap, ccp110, cep135 and gamma-tubulin. When overexpressed, it is able to induce centrosome amplification through the simultaneous generation of multiple procentrioles adjoining each parental centriole during S phase. Its central role in centriole replication suggests a possible role in tumorigenesis, centrosome aberrations being frequently observed in tumors. Also involved in deuterosome-mediated centriole amplification in multiciliated that can generate more than 100 centrioles. The polypeptide is Serine/threonine-protein kinase PLK4 (Xenopus tropicalis (Western clawed frog)).